A 177-amino-acid chain; its full sequence is KxDL motif-containing protein 1 (177 aa).

Met-1 is modified (N-acetylmethionine). A disordered region spans residues 92 to 177; it reads ARQHPEAFSH…TDDEEETREE (86 aa). Residues 119–145 show a composition bias toward polar residues; it reads SITTTIATSEQSTGSCDTSPDTASPSF.

The protein belongs to the KXD1 family. As to quaternary structure, component of the BLOC-one-related complex (BORC) which is composed of BLOC1S1, BLOC1S2, BORCS5, BORCS6, BORCS7, BORCS8, KXD1 and SNAPIN. Associates with the BLOC-1 complex. Interacts with BLOC1S1. Interacts with DTNBP1/BLOC1S7 (via coiled-coil domain).

The protein localises to the lysosome membrane. In terms of biological role, as part of the BORC complex may play a role in lysosomes movement and localization at the cell periphery. Associated with the cytosolic face of lysosomes, the BORC complex may recruit ARL8B and couple lysosomes to microtubule plus-end-directed kinesin motor. May also be involved in the biogenesis of lysosome-related organelles such as melanosomes. The chain is KxDL motif-containing protein 1 (Kxd1) from Rattus norvegicus (Rat).